Consider the following 417-residue polypeptide: Tyrosine--tRNA ligase (417 aa).

Y34 contributes to the L-tyrosine binding site. The 'HIGH' region signature appears at 39-48 (PTAKSIHIGN). L-tyrosine contacts are provided by Y165 and Q169. A 'KMSKS' region motif is present at residues 227-231 (KFGKS). K230 lines the ATP pocket. Residues 349 to 416 (TDVVELLVKD…GKKKYFLAKV (68 aa)) enclose the S4 RNA-binding domain.

It belongs to the class-I aminoacyl-tRNA synthetase family. TyrS type 1 subfamily. As to quaternary structure, homodimer.

The protein resides in the cytoplasm. The catalysed reaction is tRNA(Tyr) + L-tyrosine + ATP = L-tyrosyl-tRNA(Tyr) + AMP + diphosphate + H(+). Catalyzes the attachment of tyrosine to tRNA(Tyr) in a two-step reaction: tyrosine is first activated by ATP to form Tyr-AMP and then transferred to the acceptor end of tRNA(Tyr). The sequence is that of Tyrosine--tRNA ligase from Oenococcus oeni (strain ATCC BAA-331 / PSU-1).